A 574-amino-acid chain; its full sequence is Cytochrome P450 306a1 (574 aa).

Over residues 303 to 314 (EKEQLRQSKEAD) the composition is skewed to basic and acidic residues. The segment at 303–333 (EKEQLRQSKEADPSQEQSEADEDDEESDEED) is disordered. The span at 320–333 (SEADEDDEESDEED) shows a compositional bias: acidic residues. C505 serves as a coordination point for heme.

This sequence belongs to the cytochrome P450 family. It depends on heme as a cofactor. In terms of tissue distribution, first seen at the early (syncytial) blastoderm stage 4. During cellularization of the blastoderm (stage 5), stripes of expression appear and remain through to stage 10. Expression becomes undetectable during germ band retraction (stages 11-14). By stage 15, some expression resumes in the primordium of the ring gland, so that by stage 17 strong expression is seen, but only in the ring gland. This specific localization continues throughout the larval instars (at protein level). Expressed in the prothoracic gland cells of the larval ring gland (RG). Levels decline just after the molt to the third instar then increase later during the wandering stage. Low levels of expression are seen in the larval brain and fat body. In the adult, majority of expression is restricted to the ovaries, with low levels in the head and carcass of both sexes.

It is found in the endoplasmic reticulum membrane. It localises to the microsome membrane. The catalysed reaction is 2,22,25-trideoxyecdysone + 2 reduced [adrenodoxin] + O2 + 2 H(+) = 2,22-dideoxyecdysone + 2 oxidized [adrenodoxin] + H2O. It functions in the pathway steroid biosynthesis; ecdysteroid biosynthesis. Functionally, involved in the metabolism of insect hormones; responsible for ecdysteroid C25-hydroxylase activity. May be involved in the breakdown of synthetic insecticides. This Drosophila melanogaster (Fruit fly) protein is Cytochrome P450 306a1.